The chain runs to 176 residues: NAD(P)H-quinone oxidoreductase subunit 6, chloroplastic (176 aa).

The next 5 helical transmembrane spans lie at 10 to 30 (FLLV…VLLT), 32 to 52 (PIYS…FYIP), 61 to 81 (AQLL…VMFM), 92 to 112 (LWTV…VSLI), and 152 to 172 (FFLP…GAIA).

This sequence belongs to the complex I subunit 6 family. As to quaternary structure, NDH is composed of at least 16 different subunits, 5 of which are encoded in the nucleus.

The protein localises to the plastid. Its subcellular location is the chloroplast thylakoid membrane. It carries out the reaction a plastoquinone + NADH + (n+1) H(+)(in) = a plastoquinol + NAD(+) + n H(+)(out). It catalyses the reaction a plastoquinone + NADPH + (n+1) H(+)(in) = a plastoquinol + NADP(+) + n H(+)(out). In terms of biological role, NDH shuttles electrons from NAD(P)H:plastoquinone, via FMN and iron-sulfur (Fe-S) centers, to quinones in the photosynthetic chain and possibly in a chloroplast respiratory chain. The immediate electron acceptor for the enzyme in this species is believed to be plastoquinone. Couples the redox reaction to proton translocation, and thus conserves the redox energy in a proton gradient. This chain is NAD(P)H-quinone oxidoreductase subunit 6, chloroplastic (ndhG), found in Platanus occidentalis (Sycamore).